The following is a 126-amino-acid chain: Large ribosomal subunit protein bL12 (126 aa).

Belongs to the bacterial ribosomal protein bL12 family. Homodimer. Part of the ribosomal stalk of the 50S ribosomal subunit. Forms a multimeric L10(L12)X complex, where L10 forms an elongated spine to which 2 to 4 L12 dimers bind in a sequential fashion. Binds GTP-bound translation factors.

Forms part of the ribosomal stalk which helps the ribosome interact with GTP-bound translation factors. Is thus essential for accurate translation. The sequence is that of Large ribosomal subunit protein bL12 from Corynebacterium diphtheriae (strain ATCC 700971 / NCTC 13129 / Biotype gravis).